The following is a 487-amino-acid chain: GTPase Der (487 aa).

EngA-type G domains are found at residues 3–166 and 199–372; these read PVVA…AEAM and IKLA…DSAT. Residues 9–16, 56–60, 118–121, 205–212, 252–256, and 317–320 each bind GTP; these read GRPNVGKS, DTGGI, NKID, GKPNVGKS, DTAGV, and NKWD. Positions 373–457 constitute a KH-like domain; sequence RRVSTSMLTR…PIQLRFQEGD (85 aa).

Belongs to the TRAFAC class TrmE-Era-EngA-EngB-Septin-like GTPase superfamily. EngA (Der) GTPase family. Associates with the 50S ribosomal subunit.

Functionally, GTPase that plays an essential role in the late steps of ribosome biogenesis. The polypeptide is GTPase Der (Shewanella oneidensis (strain ATCC 700550 / JCM 31522 / CIP 106686 / LMG 19005 / NCIMB 14063 / MR-1)).